Consider the following 147-residue polypeptide: Hemoglobin subunit gamma (147 aa).

Residues 3–147 (NFTAEDKAAI…VASALGSRYH (145 aa)) form the Globin domain. Heme b contacts are provided by His64 and His93.

It belongs to the globin family. In terms of assembly, heterotetramer of two alpha chains and two gamma chains in fetal hemoglobin (Hb F). As to expression, red blood cells.

Functionally, gamma chains make up the fetal hemoglobin F, in combination with alpha chains. The protein is Hemoglobin subunit gamma (HBG) of Aotus azarae (Azara's night monkey).